Here is a 135-residue protein sequence, read N- to C-terminus: Ribosome-binding factor A (135 aa).

The protein belongs to the RbfA family. Monomer. Binds 30S ribosomal subunits, but not 50S ribosomal subunits or 70S ribosomes.

It is found in the cytoplasm. Its function is as follows. One of several proteins that assist in the late maturation steps of the functional core of the 30S ribosomal subunit. Associates with free 30S ribosomal subunits (but not with 30S subunits that are part of 70S ribosomes or polysomes). Required for efficient processing of 16S rRNA. May interact with the 5'-terminal helix region of 16S rRNA. The protein is Ribosome-binding factor A of Aliivibrio salmonicida (strain LFI1238) (Vibrio salmonicida (strain LFI1238)).